Reading from the N-terminus, the 223-residue chain is Icarapin (223 aa).

The N-terminal stretch at 1–19 (MKTLGVLFIAAWFIACTHS) is a signal peptide. 4 N-linked (GlcNAc...) asparagine glycosylation sites follow: N126, N142, N168, and N193. Polar residues predominate over residues 186-203 (LPTLIGKNETSTQSSRSV). Residues 186–223 (LPTLIGKNETSTQSSRSVESVEDFDNEIPKNQGDVLTA) are disordered.

Expressed by the venom duct.

The protein localises to the secreted. The polypeptide is Icarapin (Apis mellifera carnica (Carniolan honeybee)).